Here is a 1234-residue protein sequence, read N- to C-terminus: ATP-dependent helicase/nuclease subunit A (1234 aa).

The 474-residue stretch at 2–475 folds into the UvrD-like helicase ATP-binding domain; the sequence is TQFTTSQQAA…IILAENFRST (474 aa). ATP is bound at residue 23–30; it reads ASAGSGKT. One can recognise a UvrD-like helicase C-terminal domain in the interval 507–806; that stretch reads YGALDYGDAH…KLMTIHKSKG (300 aa).

This sequence belongs to the helicase family. AddA subfamily. In terms of assembly, heterodimer of AddA and AddB/RexB. Mg(2+) is required as a cofactor.

The catalysed reaction is Couples ATP hydrolysis with the unwinding of duplex DNA by translocating in the 3'-5' direction.. It catalyses the reaction ATP + H2O = ADP + phosphate + H(+). The heterodimer acts as both an ATP-dependent DNA helicase and an ATP-dependent, dual-direction single-stranded exonuclease. Recognizes the chi site generating a DNA molecule suitable for the initiation of homologous recombination. The AddA nuclease domain is required for chi fragment generation; this subunit has the helicase and 3' -&gt; 5' nuclease activities. The polypeptide is ATP-dependent helicase/nuclease subunit A (Lacticaseibacillus paracasei (strain ATCC 334 / BCRC 17002 / CCUG 31169 / CIP 107868 / KCTC 3260 / NRRL B-441) (Lactobacillus paracasei)).